The primary structure comprises 137 residues: Small ribosomal subunit protein uS12 (137 aa).

The interval 1–57 (MPTINQLVRKPRQSKSKKSDSPVLNRGFNSKKKQFTNLNSPQKRGVCTRVGTMTPRK) is disordered. Asp-102 is subject to 3-methylthioaspartic acid. Residues 118 to 137 (SGVDGRRQGRSLYGTKKPKN) form a disordered region.

This sequence belongs to the universal ribosomal protein uS12 family. Part of the 30S ribosomal subunit. Contacts proteins S8 and S17. May interact with IF1 in the 30S initiation complex.

With S4 and S5 plays an important role in translational accuracy. Its function is as follows. Interacts with and stabilizes bases of the 16S rRNA that are involved in tRNA selection in the A site and with the mRNA backbone. Located at the interface of the 30S and 50S subunits, it traverses the body of the 30S subunit contacting proteins on the other side and probably holding the rRNA structure together. The combined cluster of proteins S8, S12 and S17 appears to hold together the shoulder and platform of the 30S subunit. The sequence is that of Small ribosomal subunit protein uS12 from Staphylococcus haemolyticus (strain JCSC1435).